A 565-amino-acid chain; its full sequence is Proline--tRNA ligase (565 aa).

Belongs to the class-II aminoacyl-tRNA synthetase family. ProS type 1 subfamily. As to quaternary structure, homodimer.

The protein resides in the cytoplasm. It carries out the reaction tRNA(Pro) + L-proline + ATP = L-prolyl-tRNA(Pro) + AMP + diphosphate. Catalyzes the attachment of proline to tRNA(Pro) in a two-step reaction: proline is first activated by ATP to form Pro-AMP and then transferred to the acceptor end of tRNA(Pro). As ProRS can inadvertently accommodate and process non-cognate amino acids such as alanine and cysteine, to avoid such errors it has two additional distinct editing activities against alanine. One activity is designated as 'pretransfer' editing and involves the tRNA(Pro)-independent hydrolysis of activated Ala-AMP. The other activity is designated 'posttransfer' editing and involves deacylation of mischarged Ala-tRNA(Pro). The misacylated Cys-tRNA(Pro) is not edited by ProRS. The chain is Proline--tRNA ligase from Lactobacillus acidophilus (strain ATCC 700396 / NCK56 / N2 / NCFM).